Reading from the N-terminus, the 220-residue chain is Deep-sea actinoporin Cjtox I (220 aa).

The signal sequence occupies residues 1–19 (MNRLIILCLVAATIYSTIA). Positions 20–42 (LPMKEDISNEERPTSVNEKPVKK) are excised as a propeptide. Phosphocholine contacts are provided by serine 96, valine 128, serine 146, proline 148, tyrosine 174, tyrosine 178, and tyrosine 179. Residues 146–161 (SVPYDYNWYSNWWNIK) are trp-rich region, which is important for the binding to lipid membrane. The short motif at 185-187 (KGN) is the Cell attachment site, crucial for protein stability element.

It belongs to the actinoporin family. Sea anemone subfamily. As to quaternary structure, octamer or nonamer in membranes. Monomer in the soluble state. As to expression, expressed in tentacles.

The protein resides in the secreted. It localises to the nematocyst. It is found in the target cell membrane. Probably acts in predation. Pore-forming protein that forms cations-selective hydrophilic pores of around 1 nm and causes cytolysis. Pore formation is a multi-step process that involves specific recognition of membrane sphingomyelin (but neither cholesterol nor phosphatidylcholine) using aromatic rich region and adjacent phosphocholine (POC) binding site, firm binding to the membrane (mainly driven by hydrophobic interactions) accompanied by the transfer of the N-terminal region to the lipid-water interface and finally pore formation after oligomerization of monomers. Shows hemolytic activity on equine erythrocytes. Hemolysis is moderately inhibited in presence of sphingomyelin, suggesting that this protein targets sphingomyelin. The chain is Deep-sea actinoporin Cjtox I from Cribrinopsis japonica (Deep-sea anemone).